Reading from the N-terminus, the 807-residue chain is Serine/threonine-protein kinase B-raf (807 aa).

Composition is skewed to low complexity over residues 1–15 and 110–128; these read MAAL…GASL and SVSS…SSSL. 2 disordered regions span residues 1 to 36 and 104 to 128; these read MAAL…YAGS and GNGT…SSSL. The RBD domain occupies 155–227; that stretch reads PIVRVFLPNK…TGEELHVEVL (73 aa). The segment at 234 to 280 adopts a Phorbol-ester/DAG-type zinc-finger fold; the sequence is THNFVRKTFFTLAFCDFCRKLLFQGFRCQTCGYKFHQRCSTEVPLMC. Positions 235, 248, 251, 261, 264, 269, 272, and 280 each coordinate Zn(2+). Positions 303-313 are enriched in polar residues; that stretch reads EETTLGETTPA. Disordered regions lie at residues 303-372 and 434-494; these read EETT…VHIN and STAG…EIPD. The segment covering 314–328 has biased composition (low complexity); the sequence is SGSYPSVPPSDSVGP. Composition is skewed to basic and acidic residues over residues 348–363 and 463–487; these read PADE…RDRS and QRER…RDSS. In terms of domain architecture, Protein kinase spans 497–757; sequence ITVGQRIGSG…PQILASIELL (261 aa). ATP-binding positions include 503-511 and lysine 523; that span reads IGSGSFGTV. Aspartate 616 (proton acceptor) is an active-site residue. Serine 790 bears the Phosphoserine; by MAPK1 mark. Threonine 793 carries the phosphothreonine; by MAPK1 modification.

The protein belongs to the protein kinase superfamily. TKL Ser/Thr protein kinase family. RAF subfamily. Requires Zn(2+) as cofactor. Post-translationally, phosphorylated. Expressed preferentially in neural tissue.

The protein resides in the nucleus. Its subcellular location is the cytoplasm. It is found in the cell membrane. The catalysed reaction is L-seryl-[protein] + ATP = O-phospho-L-seryl-[protein] + ADP + H(+). The enzyme catalyses L-threonyl-[protein] + ATP = O-phospho-L-threonyl-[protein] + ADP + H(+). In quiescent cells, maintained in an inactive state via an intramolecular interaction between the protein kinase and N-terminal domains. Following mitogen-mediated cell activation, binds via its RGB domain to active HRAS (GTP-bound) which releases the inhibitory intramolecular interaction between the two domains. This allows the MAP2K1-mediated dimerization of KSR1 or KSR2, and BRAF which activates BRAF. Protein kinase involved in the activation of the MAP signaling cascade. May play a role in transducing specific signals in neural cells. The protein is Serine/threonine-protein kinase B-raf of Coturnix japonica (Japanese quail).